Reading from the N-terminus, the 192-residue chain is Cytochrome c oxidase assembly protein CtaG (192 aa).

Residues 1 to 9 (MSLSPHQKT) lie on the Cytoplasmic side of the membrane. Residues 10-30 (AGWLVGVVVVMGAASFAAVPF) form a helical; Signal-anchor for type II membrane protein membrane-spanning segment. Topologically, residues 31-192 (YDWFCRVTGF…AARPAGIDVN (162 aa)) are periplasmic.

This sequence belongs to the COX11/CtaG family.

The protein localises to the cell inner membrane. Its function is as follows. Exerts its effect at some terminal stage of cytochrome c oxidase synthesis, probably by being involved in the insertion of the copper B into subunit I. This is Cytochrome c oxidase assembly protein CtaG from Cereibacter sphaeroides (strain ATCC 17025 / ATH 2.4.3) (Rhodobacter sphaeroides).